We begin with the raw amino-acid sequence, 112 residues long: Small ribosomal subunit protein bS6 (112 aa).

It belongs to the bacterial ribosomal protein bS6 family.

Binds together with bS18 to 16S ribosomal RNA. The protein is Small ribosomal subunit protein bS6 (rpsF) of Chlamydia muridarum (strain MoPn / Nigg).